A 422-amino-acid polypeptide reads, in one-letter code: UDP-N-acetylglucosamine 1-carboxyvinyltransferase (422 aa).

22 to 23 lines the phosphoenolpyruvate pocket; sequence KN. A UDP-N-acetyl-alpha-D-glucosamine-binding site is contributed by Arg-95. Cys-119 (proton donor) is an active-site residue. Cys-119 carries the post-translational modification 2-(S-cysteinyl)pyruvic acid O-phosphothioketal. UDP-N-acetyl-alpha-D-glucosamine-binding positions include 124 to 128, Asp-309, and Val-331; that span reads RPIDQ.

This sequence belongs to the EPSP synthase family. MurA subfamily.

The protein localises to the cytoplasm. The enzyme catalyses phosphoenolpyruvate + UDP-N-acetyl-alpha-D-glucosamine = UDP-N-acetyl-3-O-(1-carboxyvinyl)-alpha-D-glucosamine + phosphate. The protein operates within cell wall biogenesis; peptidoglycan biosynthesis. Its function is as follows. Cell wall formation. Adds enolpyruvyl to UDP-N-acetylglucosamine. The sequence is that of UDP-N-acetylglucosamine 1-carboxyvinyltransferase from Anaeromyxobacter sp. (strain Fw109-5).